Here is a 610-residue protein sequence, read N- to C-terminus: tRNA uridine 5-carboxymethylaminomethyl modification enzyme MnmG (610 aa).

14 to 19 (GAGHAG) is an FAD binding site. NAD(+) is bound at residue 274-288 (GPRYCPSIEDKIVKF).

This sequence belongs to the MnmG family. In terms of assembly, homodimer. Heterotetramer of two MnmE and two MnmG subunits. FAD is required as a cofactor.

The protein resides in the cytoplasm. NAD-binding protein involved in the addition of a carboxymethylaminomethyl (cmnm) group at the wobble position (U34) of certain tRNAs, forming tRNA-cmnm(5)s(2)U34. The chain is tRNA uridine 5-carboxymethylaminomethyl modification enzyme MnmG from Chlamydia trachomatis serovar D (strain ATCC VR-885 / DSM 19411 / UW-3/Cx).